The chain runs to 183 residues: MVIDNFNIFTIISNAKTFGINTNVFETNIINLAIVVGTLFYYGKLTLSDLLKTRKKTIIKNILDIDEKIRSSQSSLYLAELEFENAAKKASLIRSNGTTFCLKSFDIIRSSVNEDIKRLKQSKRLILRTEDKKSVREIFKNLYSQACQKAKATIIKRLNSKIHKKIILKKMEKMSLKKLKPKY.

The chain crosses the membrane as a helical span at residues isoleucine 20–tyrosine 42.

This sequence belongs to the ATPase B chain family. In terms of assembly, F-type ATPases have 2 components, F(1) - the catalytic core - and F(0) - the membrane proton channel. F(1) has five subunits: alpha(3), beta(3), gamma(1), delta(1), epsilon(1). F(0) has four main subunits: a(1), b(1), b'(1) and c(10-14). The alpha and beta chains form an alternating ring which encloses part of the gamma chain. F(1) is attached to F(0) by a central stalk formed by the gamma and epsilon chains, while a peripheral stalk is formed by the delta, b and b' chains.

Its subcellular location is the plastid. The protein localises to the chloroplast thylakoid membrane. F(1)F(0) ATP synthase produces ATP from ADP in the presence of a proton or sodium gradient. F-type ATPases consist of two structural domains, F(1) containing the extramembraneous catalytic core and F(0) containing the membrane proton channel, linked together by a central stalk and a peripheral stalk. During catalysis, ATP synthesis in the catalytic domain of F(1) is coupled via a rotary mechanism of the central stalk subunits to proton translocation. Functionally, component of the F(0) channel, it forms part of the peripheral stalk, linking F(1) to F(0). This Euglena gracilis protein is ATP synthase subunit b, chloroplastic.